A 662-amino-acid chain; its full sequence is 3',5'-cyclic-AMP phosphodiesterase, isoform F (662 aa).

Disordered stretches follow at residues 79–108 (VPAS…LSQG) and 207–245 (SAGQ…RLPT). Over residues 80–98 (PASNKSRRPNQSSSASRSG) the composition is skewed to polar residues. Residues 248–577 (VETPRENELG…DYYQSMIPPS (330 aa)) enclose the PDEase domain. His-324 functions as the Proton donor in the catalytic mechanism. 324-328 (HNSLH) serves as a coordination point for 3',5'-cyclic AMP. 4 residues coordinate a divalent metal cation: His-328, His-364, Asp-365, and Asp-482. 3',5'-cyclic AMP-binding residues include Asp-365, Asp-482, and Gln-533. The segment covering 599-616 (EESDQENLAELEEGDESG) has biased composition (acidic residues). The tract at residues 599-662 (EESDQENLAE…CQNQPQHGGM (64 aa)) is disordered. The segment covering 617–634 (GESTTTGTTGTTAASALS) has biased composition (low complexity). Residues 635–646 (GAGGGGGGGGGM) show a composition bias toward gly residues. A compositionally biased stretch (polar residues) spans 652–662 (GCQNQPQHGGM).

The protein belongs to the cyclic nucleotide phosphodiesterase family. PDE4 subfamily. Monomer. A divalent metal cation serves as cofactor.

It carries out the reaction 3',5'-cyclic AMP + H2O = AMP + H(+). The protein operates within purine metabolism; 3',5'-cyclic AMP degradation; AMP from 3',5'-cyclic AMP: step 1/1. In terms of biological role, hydrolyzes the second messenger cAMP, which is a key regulator of many important physiological processes. Vital for female fertility. Required for learning/memory. This Drosophila melanogaster (Fruit fly) protein is 3',5'-cyclic-AMP phosphodiesterase, isoform F.